Consider the following 729-residue polypeptide: MAAAWSWRASHSTITMTSGSLVVLFLLLSIWQPAVQVEGRRQMANSQEMIKDHLGARSQNKTPAITNNANQSSTSSADLDDGAADDDDNKADLPVNVSSKPYWRNPKKMSFLQTRPSGSLLTLNCHALGNPEPNITWYRNGTVDWTRGYGSLKRNRWTLTMEDLVPGDCGNYTCKVCNSLGCIRHDTQVIVSDRVNHKPILMTGPLNLTLVVNSTGSMHCKYLSDLTSKKAWIFVPCHGMTNCSNNRSIIAEDKDQLDFVNVRMEQEGWYTCVESNSLGQSNSTAYLRVVRSLHVLEAGVASGSLHSTSFVYIFVFGGLIFIFMTTLFVFYAIRKMKHEKVLKQRIETVHQWTKKVIIFKPEGGGDSSGSMDTMIMPVVRIQKQRTTVLQNGNEPAPFNEYEFPLDSNWELPRSHLVLGATLGEGAFGRVVMAEVNNAIVAVKMVKEGHTDDDIASLVREMEVMKIIGRHINIINLLGCCSQNGPLYVIVEYAPHGNLKDFLYKNRPFGRDQDRDSSQPPPSPPAHVITEKDLIKFAHQIARGMDYLASRRCIHRDLAARNVLVSDDYVLKIADFGLARDIQSTDYYRKNTNGRLPIKWMAPESLQEKFYDSKSDVWSYGILLWEIMTYGQQPYPTIMSAEELYTYLMSGQRMEKPAKCSMNIYILMRQCWHFNADDRPPFTEIVEYMDKLLQTKEDYLDVDIANLDTPPSTSDEEEDETDNLQKWCNY.

The signal sequence occupies residues 1–36 (MAAAWSWRASHSTITMTSGSLVVLFLLLSIWQPAVQ). Over 37–309 (VEGRRQMANS…VASGSLHSTS (273 aa)) the chain is Extracellular. The interval 56-101 (ARSQNKTPAITNNANQSSTSSADLDDGAADDDDNKADLPVNVSSKP) is disordered. Residues 66 to 77 (TNNANQSSTSSA) are compositionally biased toward low complexity. Asparagine 70 carries N-linked (GlcNAc...) asparagine glycosylation. Acidic residues predominate over residues 78–89 (DLDDGAADDDDN). Residues asparagine 96, asparagine 134, asparagine 140, asparagine 171, asparagine 207, asparagine 213, asparagine 242, asparagine 246, and asparagine 282 are each glycosylated (N-linked (GlcNAc...) asparagine). 2 consecutive Ig-like C2-type domains span residues 106 to 192 (PKKM…VIVS) and 203 to 279 (TGPL…NSLG). Cysteine 125 and cysteine 174 form a disulfide bridge. Cysteine 220 and cysteine 272 are disulfide-bonded. Residues 310–330 (FVYIFVFGGLIFIFMTTLFVF) traverse the membrane as a helical segment. Topologically, residues 331–729 (YAIRKMKHEK…TDNLQKWCNY (399 aa)) are cytoplasmic. Positions 416–692 (LVLGATLGEG…EIVEYMDKLL (277 aa)) constitute a Protein kinase domain. Residues 422–430 (LGEGAFGRV) and lysine 443 contribute to the ATP site. Aspartate 556 serves as the catalytic Proton acceptor. The residue at position 587 (tyrosine 587) is a Phosphotyrosine; by autocatalysis.

This sequence belongs to the protein kinase superfamily. Tyr protein kinase family. Fibroblast growth factor receptor subfamily. In terms of tissue distribution, in early embryos, expression is specific to mesodermal primordium and invaginated mesodermal cells. At later stages, expression is seen in putative muscle precursor cells and in the CNS.

It is found in the membrane. The catalysed reaction is L-tyrosyl-[protein] + ATP = O-phospho-L-tyrosyl-[protein] + ADP + H(+). May be required for patterning of muscle precursor cells. May be essential for generation of mesodermal and endodermal layers, invaginations of various types of cells and CNS formation. This is Fibroblast growth factor receptor homolog 1 (htl) from Drosophila melanogaster (Fruit fly).